A 198-amino-acid polypeptide reads, in one-letter code: Translation initiation factor IF-3 (198 aa).

The disordered stretch occupies residues 168–198; the sequence is SLAPKKAGSPKKAETDTAKKENPKKAVETKE. A compositionally biased stretch (basic and acidic residues) spans 178–198; sequence KKAETDTAKKENPKKAVETKE.

The protein belongs to the IF-3 family. As to quaternary structure, monomer.

It is found in the cytoplasm. IF-3 binds to the 30S ribosomal subunit and shifts the equilibrium between 70S ribosomes and their 50S and 30S subunits in favor of the free subunits, thus enhancing the availability of 30S subunits on which protein synthesis initiation begins. In Phocaeicola vulgatus (strain ATCC 8482 / DSM 1447 / JCM 5826 / CCUG 4940 / NBRC 14291 / NCTC 11154) (Bacteroides vulgatus), this protein is Translation initiation factor IF-3.